The sequence spans 152 residues: 3-dehydroquinate dehydratase (152 aa).

Tyrosine 23 functions as the Proton acceptor in the catalytic mechanism. Positions 75, 81, and 88 each coordinate substrate. The active-site Proton donor is histidine 101. Substrate contacts are provided by residues 102–103 and arginine 112; that span reads IS.

It belongs to the type-II 3-dehydroquinase family. As to quaternary structure, homododecamer.

It catalyses the reaction 3-dehydroquinate = 3-dehydroshikimate + H2O. The protein operates within metabolic intermediate biosynthesis; chorismate biosynthesis; chorismate from D-erythrose 4-phosphate and phosphoenolpyruvate: step 3/7. Functionally, catalyzes a trans-dehydration via an enolate intermediate. This is 3-dehydroquinate dehydratase from Alkalilimnicola ehrlichii (strain ATCC BAA-1101 / DSM 17681 / MLHE-1).